We begin with the raw amino-acid sequence, 536 residues long: Prickle planar cell polarity protein 3-B (536 aa).

The 110-residue stretch at 66–175 (SGSQRDSLCD…CVRPISGTMS (110 aa)) folds into the PET domain. 3 LIM zinc-binding domains span residues 177 to 241 (TVCQ…ELKR), 242 to 302 (PRCL…LYAQ), and 305 to 366 (DSCG…HTKS). A disordered region spans residues 418 to 536 (PTQAAPARSL…KKKDKSCFLS (119 aa)). The span at 438–448 (FSRECPNRRSL) shows a compositional bias: basic and acidic residues. The segment covering 450-467 (DLSSHTRTPTRVTFQLPS) has biased composition (polar residues). The segment covering 474-487 (SISFSRPSFTSSSS) has biased composition (low complexity).

This sequence belongs to the prickle / espinas / testin family. Interacts with vangl2 via its C-terminus. The vangl2-dependent membrane recruitment of prickle3 is a prerequisite for its polarization. Interacts with wtip. Wtip is involved in the recruitment of prickle3 to the basal body.

Its subcellular location is the cytoplasm. It is found in the cell membrane. It localises to the mitochondrion. Its function is as follows. Involved in the planar cell polarity (PCP) pathway that is essential for the polarization of epithelial cells during morphogenetic processes, including gastrulation and neurulation. PCP is maintained by two molecular modules, the global and the core modules. Proteins of the core module include the proteins Frizzled (Fz), Disheveled (Dsh), Van Gogh (Vang), Prickle (Pk), Flamingo (Fmi, Celsr) and Diego (Dgo). The core module proteins develop subcellular asymmetry, accumulating in two groups on opposite sides of epithelial cells. Distinct proximal (Vang, Pk and Fmi) and distal (Fz, Dsh, Dgo and Fmi) complexes segregate to opposite sides of the cell, where they interact with the opposite complex in the neighboring cell at or near the adherents junctions. Directional information to orient polarization with respect to the tissue axes is provided by the global module which involves Wnt proteins. Involved in the organization of the basal body. Involved in cilia growth and positioning. Required for proper assembly, stability, and function of mitochondrial membrane ATP synthase (mitochondrial complex V). The chain is Prickle planar cell polarity protein 3-B (prickle3-b) from Xenopus laevis (African clawed frog).